A 390-amino-acid polypeptide reads, in one-letter code: Elongation factor Tu 1 (390 aa).

The tr-type G domain occupies 10–201 (KPHVNVGTIG…LDEYVAVPPR (192 aa)). The segment at 19-26 (GHVDHGKT) is G1. Residue 19-26 (GHVDHGKT) participates in GTP binding. Residue Thr26 coordinates Mg(2+). A G2 region spans residues 55 to 59 (GITIA). Residues 76–79 (DCPG) form a G3 region. Residues 76-80 (DCPGH) and 131-134 (NKAD) each bind GTP. Positions 131–134 (NKAD) are G4. The segment at 168-170 (SAL) is G5.

This sequence belongs to the TRAFAC class translation factor GTPase superfamily. Classic translation factor GTPase family. EF-Tu/EF-1A subfamily. As to quaternary structure, monomer.

It localises to the cytoplasm. The enzyme catalyses GTP + H2O = GDP + phosphate + H(+). Functionally, GTP hydrolase that promotes the GTP-dependent binding of aminoacyl-tRNA to the A-site of ribosomes during protein biosynthesis. In Wolbachia pipientis wMel, this protein is Elongation factor Tu 1.